The sequence spans 138 residues: Small ribosomal subunit protein uS11c (138 aa).

A disordered region spans residues 1–22 (MAKSIPRISSRRNGRIGSGNNV).

The protein belongs to the universal ribosomal protein uS11 family. As to quaternary structure, part of the 30S ribosomal subunit.

Its subcellular location is the plastid. In Cuscuta reflexa (Southern Asian dodder), this protein is Small ribosomal subunit protein uS11c.